Consider the following 203-residue polypeptide: ATP-dependent Clp protease proteolytic subunit 2 (203 aa).

S98 functions as the Nucleophile in the catalytic mechanism. Residue H123 is part of the active site.

Belongs to the peptidase S14 family. Fourteen ClpP subunits assemble into 2 heptameric rings which stack back to back to give a disk-like structure with a central cavity, resembling the structure of eukaryotic proteasomes.

The protein localises to the cytoplasm. It carries out the reaction Hydrolysis of proteins to small peptides in the presence of ATP and magnesium. alpha-casein is the usual test substrate. In the absence of ATP, only oligopeptides shorter than five residues are hydrolyzed (such as succinyl-Leu-Tyr-|-NHMec, and Leu-Tyr-Leu-|-Tyr-Trp, in which cleavage of the -Tyr-|-Leu- and -Tyr-|-Trp bonds also occurs).. Cleaves peptides in various proteins in a process that requires ATP hydrolysis. Has a chymotrypsin-like activity. Plays a major role in the degradation of misfolded proteins. This chain is ATP-dependent Clp protease proteolytic subunit 2, found in Chlamydia muridarum (strain MoPn / Nigg).